Consider the following 178-residue polypeptide: FMN reductase (NADH) RutF (178 aa).

The protein belongs to the non-flavoprotein flavin reductase family. RutF subfamily.

It carries out the reaction FMNH2 + NAD(+) = FMN + NADH + 2 H(+). Catalyzes the reduction of FMN to FMNH2 which is used to reduce pyrimidine by RutA via the Rut pathway. This chain is FMN reductase (NADH) RutF, found in Pseudomonas syringae pv. syringae (strain B728a).